The chain runs to 290 residues: Acetylglutamate kinase (290 aa).

Substrate contacts are provided by residues 60–61, arginine 82, and asparagine 187; that span reads GG.

It belongs to the acetylglutamate kinase family. ArgB subfamily.

It localises to the cytoplasm. The enzyme catalyses N-acetyl-L-glutamate + ATP = N-acetyl-L-glutamyl 5-phosphate + ADP. Its pathway is amino-acid biosynthesis; L-arginine biosynthesis; N(2)-acetyl-L-ornithine from L-glutamate: step 2/4. In terms of biological role, catalyzes the ATP-dependent phosphorylation of N-acetyl-L-glutamate. The polypeptide is Acetylglutamate kinase (Marinobacter nauticus (strain ATCC 700491 / DSM 11845 / VT8) (Marinobacter aquaeolei)).